The sequence spans 891 residues: MEQPVIKEGTLALIDTFAYLFRSYYMSAKNKPLTNDKGFPTGLLTGLVGMVKKFYKDRKNMPFIVFALESQTKTKRAEKLGEYKQNRKDAPKEMLLQIPIALEWLQKMGFVCVEVNGFEADDVIASLATLSPYKTRIYSKDKDFNQLLSDKIALFDGKTEFLAKDCVEKYGILPSQFTDYQGIVGDSSDNYKGVKGIGSKNAKELLQRLGSLEKIYENLDLAKNLLSPKMYRALIHDKASAFLSKELATLERGCIKEFDFLSCAFPSENPLLKIKDELKEYGFISTLRDLENSPTPLILDNAPLLDNTPALDNTPKKSCMIVLESAAPLSAFLEKLEKTNARVFARLVLDKEKKVLALAFLYEDQGYFLPLEEALFSPFSLEFLQNAFFKMLQHAQIIGHDLKPLLSFLKAKYQVPLENIRIQDTQILAFLKNPEKVGFDEVLKEYLKEELIPHEKIKDFKTKAEKLELLSVELNALKRLCEYFEKGGLEENLLSLAREIETPFMKVLMGMEFQGFKIDAPYFKRLEQEFKNELHVLERQILELIGVDFNLNSPKQLSEVLYDKLGLPKNKSHSTDEKSLLKILDKHPSIALILEYRELNKLFNTYTTPLLRLKDKDDKIHTTFIQTGTATGRLSSHSPNLQNIPVRSPKGLLIRKGFIASSKEYCLLGVDYSQIELRLLAHFSQDKDLMEAFLKGRDIHLETSKALFGEYLAKEKRSIAKSINFGLVYGMGSKKLSETLNISLNEAKSYIEAYFKRFPSIKDYLNRMKEEILKTSKAFTLLGRYRVFDFTGANDYVKGNYLREGVNAIFQGSASDLLKLGMLKVSERFKNNPSVRLLLQVHDELIFEIEEKNAPELQQEIQRILNDEVYPLRVPLETSAFIAKRWNELKG.

In terms of domain architecture, 5'-3' exonuclease spans 1 to 313; it reads MEQPVIKEGT…LLDNTPALDN (313 aa). One can recognise a 3'-5' exonuclease domain in the interval 314–488; that stretch reads TPKKSCMIVL…RLCEYFEKGG (175 aa). The polymerase stretch occupies residues 492–890; the sequence is NLLSLAREIE…FIAKRWNELK (399 aa).

Belongs to the DNA polymerase type-A family. In terms of assembly, single-chain monomer with multiple functions.

The enzyme catalyses DNA(n) + a 2'-deoxyribonucleoside 5'-triphosphate = DNA(n+1) + diphosphate. In terms of biological role, in addition to polymerase activity, this DNA polymerase exhibits 3'-5' and 5'-3' exonuclease activity. The sequence is that of DNA polymerase I (polA) from Helicobacter pylori (strain ATCC 700392 / 26695) (Campylobacter pylori).